A 62-amino-acid polypeptide reads, in one-letter code: MSVLFQLLIAAFVALSFAMIIGVPVVFSTGDASDDANKLIWGGAAAWVVLLFVAALASIVVI.

A run of 2 helical transmembrane segments spans residues 8-28 (LIAA…VVFS) and 41-61 (WGGA…SIVV).

The protein belongs to the PsbZ family. In terms of assembly, PSII is composed of 1 copy each of membrane proteins PsbA, PsbB, PsbC, PsbD, PsbE, PsbF, PsbH, PsbI, PsbJ, PsbK, PsbL, PsbM, PsbT, PsbX, PsbY, PsbZ, Psb30/Ycf12, peripheral proteins PsbO, CyanoQ (PsbQ), PsbU, PsbV and a large number of cofactors. It forms dimeric complexes.

The protein resides in the cellular thylakoid membrane. In terms of biological role, may control the interaction of photosystem II (PSII) cores with the light-harvesting antenna, regulates electron flow through the 2 photosystem reaction centers. PSII is a light-driven water plastoquinone oxidoreductase, using light energy to abstract electrons from H(2)O, generating a proton gradient subsequently used for ATP formation. The chain is Photosystem II reaction center protein Z from Acaryochloris marina (strain MBIC 11017).